The chain runs to 73 residues: Large ribosomal subunit protein bL31 (73 aa).

Belongs to the bacterial ribosomal protein bL31 family. Type A subfamily. Part of the 50S ribosomal subunit.

Binds the 23S rRNA. The polypeptide is Large ribosomal subunit protein bL31 (Dinoroseobacter shibae (strain DSM 16493 / NCIMB 14021 / DFL 12)).